A 352-amino-acid chain; its full sequence is Long-chain-alcohol O-fatty-acyltransferase (352 aa).

A run of 8 helical transmembrane segments spans residues 13–33 (VWISAIAAACYCRFVPAVAPH), 34–54 (GGALRLLLLLPVVLLFIFLPL), 67–87 (LYLVWLANFKLLLFAFHLGPL), 128–148 (KVVLFVAKLVFFAGILKIYEF), 155–175 (FVISVLYCFHFYLGTEITLAA), 239–259 (VAGAMLVAFTVSGLMHEVFFF), 267–287 (SWEVTGFFVLHGVCTAVEMVV), and 303–323 (GALTVGFVMVTGGWLFLPQLV).

The protein belongs to the wax synthase family.

It localises to the microsome membrane. The catalysed reaction is a long chain fatty alcohol + a fatty acyl-CoA = a wax ester + CoA. Functionally, catalyzes the final step in the synthesis of long-chain linear esters (waxes). Has activity with both saturated and monounsaturated acyl-CoA ranging from 14 to 24 carbons in length, but C20:1 acyl-CoA is the preferred substrate. The sequence is that of Long-chain-alcohol O-fatty-acyltransferase from Simmondsia chinensis (Jojoba).